The primary structure comprises 387 residues: Galactokinase (387 aa).

Glutamate 33 to aspartate 36 is a substrate binding site. ATP is bound by residues serine 67 and glycine 124–serine 130. The Mg(2+) site is built by serine 130 and glutamate 162. The active-site Proton acceptor is the aspartate 174. Tyrosine 224 contacts substrate.

Belongs to the GHMP kinase family. GalK subfamily.

The protein localises to the cytoplasm. The catalysed reaction is alpha-D-galactose + ATP = alpha-D-galactose 1-phosphate + ADP + H(+). The protein operates within carbohydrate metabolism; galactose metabolism. Its function is as follows. Catalyzes the transfer of the gamma-phosphate of ATP to D-galactose to form alpha-D-galactose-1-phosphate (Gal-1-P). In Lactiplantibacillus plantarum (strain ATCC BAA-793 / NCIMB 8826 / WCFS1) (Lactobacillus plantarum), this protein is Galactokinase.